The following is a 105-amino-acid chain: BLOC-1-related complex subunit 7 (105 aa).

It belongs to the BORCS7 family. Component of the BLOC-one-related complex (BORC) which is composed of BLOC1S1, BLOC1S2, BORCS5, BORCS6, BORCS7, BORCS8, KXD1 and SNAPIN.

Its subcellular location is the lysosome membrane. Its function is as follows. As part of the BORC complex may play a role in lysosomes movement and localization at the cell periphery. Associated with the cytosolic face of lysosomes, the BORC complex may recruit ARL8B and couple lysosomes to microtubule plus-end-directed kinesin motor. This chain is BLOC-1-related complex subunit 7, found in Bos taurus (Bovine).